A 253-amino-acid polypeptide reads, in one-letter code: Zwei Ig domain protein zig-4 (253 aa).

The first 16 residues, 1–16 (MFAIALLSFLVVLINA), serve as a signal peptide directing secretion. Ig-like C2-type domains are found at residues 43–146 (PAKI…AEVE) and 162–245 (PEIV…TFLY). Intrachain disulfides connect Cys-67/Cys-130 and Cys-183/Cys-229.

As to expression, expressed in PVT, ASK, BAG, M2 and ASI neurons. In L1 larvae, expressed in pharyngeal ectoderm and mesoderm.

Its subcellular location is the secreted. Required for maintaining axon position of PVQ and PVP neurons postembryonically in the ventral nerve cord (VNC) by preventing axons drifting into the opposite side of the VNC that could occur during body growth and movement. In Caenorhabditis elegans, this protein is Zwei Ig domain protein zig-4.